A 429-amino-acid polypeptide reads, in one-letter code: N5-carboxyaminoimidazole ribonucleotide synthase (429 aa).

Residues K117, K157, 194-197 (EERV), E202, and 280-281 (NE) contribute to the ATP site. The 190-residue stretch at 121 to 310 (RQRLAAAGVA…QFEQHLRAVL (190 aa)) folds into the ATP-grasp domain. A disordered region spans residues 406 to 429 (RASDDAVGVPPACGGRSDEEERRL).

Belongs to the PurK/PurT family. As to quaternary structure, homodimer.

It catalyses the reaction 5-amino-1-(5-phospho-beta-D-ribosyl)imidazole + hydrogencarbonate + ATP = 5-carboxyamino-1-(5-phospho-D-ribosyl)imidazole + ADP + phosphate + 2 H(+). It functions in the pathway purine metabolism; IMP biosynthesis via de novo pathway; 5-amino-1-(5-phospho-D-ribosyl)imidazole-4-carboxylate from 5-amino-1-(5-phospho-D-ribosyl)imidazole (N5-CAIR route): step 1/2. Its function is as follows. Catalyzes the ATP-dependent conversion of 5-aminoimidazole ribonucleotide (AIR) and HCO(3)(-) to N5-carboxyaminoimidazole ribonucleotide (N5-CAIR). In Mycobacterium bovis (strain ATCC BAA-935 / AF2122/97), this protein is N5-carboxyaminoimidazole ribonucleotide synthase.